Here is a 135-residue protein sequence, read N- to C-terminus: Small ribosomal subunit protein bS16 (135 aa).

The segment at 106–135 (TERRQKRLVVKSRRRQAKKEAEGKAAGAEA) is disordered. The segment covering 109–122 (RQKRLVVKSRRRQA) has biased composition (basic residues).

It belongs to the bacterial ribosomal protein bS16 family.

This chain is Small ribosomal subunit protein bS16, found in Chlorobium phaeobacteroides (strain DSM 266 / SMG 266 / 2430).